The chain runs to 214 residues: Intermembrane phospholipid transport system binding protein MlaC (214 aa).

The N-terminal stretch at 1–28 (MNLIQLKKWFTILTFVLTAFLVTRTAIA) is a signal peptide.

Belongs to the MlaC/ttg2D family.

It localises to the periplasm. Its function is as follows. Involved in a phospholipid transport pathway that maintains lipid asymmetry in the outer membrane by retrograde trafficking of phospholipids from the outer membrane to the inner membrane. May transfer phospholipid across the periplasmic space and deliver it to the MlaFEDB complex at the inner membrane. The protein is Intermembrane phospholipid transport system binding protein MlaC of Haemophilus influenzae (strain ATCC 51907 / DSM 11121 / KW20 / Rd).